A 296-amino-acid polypeptide reads, in one-letter code: NADPH-dependent 1-acyldihydroxyacetone phosphate reductase (296 aa).

Residue Ile-9 coordinates NADP(+). The GXSXG motif lies at 11-15 (GCSEG). Thr-35, Arg-41, Asp-56, Asn-84, Lys-117, Tyr-148, Lys-152, Val-181, and Thr-183 together coordinate NADP(+). Tyr-148 acts as the Proton donor in catalysis. The active-site Lowers pKa of active site Tyr is Lys-152.

It belongs to the short-chain dehydrogenases/reductases (SDR) family.

Its subcellular location is the lipid droplet. The protein resides in the cytoplasm. It localises to the vacuole. It is found in the endoplasmic reticulum. The protein localises to the golgi apparatus. Its subcellular location is the mitochondrion outer membrane. The catalysed reaction is 1-hexadecanoyl-sn-glycero-3-phosphate + NADP(+) = 1-hexadecanoylglycerone 3-phosphate + NADPH + H(+). It catalyses the reaction a 1-acylglycerone 3-phosphate + NADPH + H(+) = a 1-acyl-sn-glycero-3-phosphate + NADP(+). It carries out the reaction a triacylglycerol + H2O = a diacylglycerol + a fatty acid + H(+). Its function is as follows. Can convert acyl and alkyl dihydroxyacetone-phosphate (DHAP) into glycerolipids and ether lipids, respectively. Required for the biosynthesis of phosphatidic acid via the DHAP pathway, where it reduces 1-acyl DHAP to lysophosphatidic acid (LPA). Also has triacylglycerol (TAG) lipase activity. Involved in the mobilization of the non-polar storage lipids triacylglycerols (TAGs) from lipid particles by hydrolysis of TAGs. Lipolysis of TAG by AYR1 is essential for starvation-induced autophagy. Forms an NADPH-regulated cation-selective channel in the mitochondrial outer membrane. The polypeptide is NADPH-dependent 1-acyldihydroxyacetone phosphate reductase (ayr1) (Schizosaccharomyces pombe (strain 972 / ATCC 24843) (Fission yeast)).